Consider the following 411-residue polypeptide: 2,3-bisphosphoglycerate-independent phosphoglycerate mutase (411 aa).

Belongs to the BPG-independent phosphoglycerate mutase family. A-PGAM subfamily.

The catalysed reaction is (2R)-2-phosphoglycerate = (2R)-3-phosphoglycerate. The protein operates within carbohydrate degradation; glycolysis; pyruvate from D-glyceraldehyde 3-phosphate: step 3/5. Catalyzes the interconversion of 2-phosphoglycerate and 3-phosphoglycerate. This Methanosphaerula palustris (strain ATCC BAA-1556 / DSM 19958 / E1-9c) protein is 2,3-bisphosphoglycerate-independent phosphoglycerate mutase.